A 98-amino-acid polypeptide reads, in one-letter code: NADH-ubiquinone oxidoreductase chain 4L (98 aa).

3 consecutive transmembrane segments (helical) span residues 1-21 (MIPT…GMLT), 29-49 (SLLC…LIAL), and 61-81 (IILL…LVSI).

This sequence belongs to the complex I subunit 4L family. As to quaternary structure, core subunit of respiratory chain NADH dehydrogenase (Complex I) which is composed of 45 different subunits.

Its subcellular location is the mitochondrion inner membrane. The catalysed reaction is a ubiquinone + NADH + 5 H(+)(in) = a ubiquinol + NAD(+) + 4 H(+)(out). Its function is as follows. Core subunit of the mitochondrial membrane respiratory chain NADH dehydrogenase (Complex I) which catalyzes electron transfer from NADH through the respiratory chain, using ubiquinone as an electron acceptor. Part of the enzyme membrane arm which is embedded in the lipid bilayer and involved in proton translocation. The chain is NADH-ubiquinone oxidoreductase chain 4L (MT-ND4L) from Macaca ochreata subsp. brunnescens (Muna-buton macaque).